Here is a 227-residue protein sequence, read N- to C-terminus: RNA pyrophosphohydrolase (227 aa).

The 144-residue stretch at 6–149 (GFRPNVGIIL…KRDVYQMALT (144 aa)) folds into the Nudix hydrolase domain. Residues 38–59 (GGIKYGETPEQAMYRELHEEIG) carry the Nudix box motif. Residues 165–227 (PYGTHGAHGA…PVSTTRSTDD (63 aa)) are disordered. Residues 192-201 (AQAAQQADAD) show a composition bias toward low complexity. A compositionally biased stretch (polar residues) spans 217 to 227 (TPVSTTRSTDD).

Belongs to the Nudix hydrolase family. RppH subfamily. It depends on a divalent metal cation as a cofactor.

Its function is as follows. Accelerates the degradation of transcripts by removing pyrophosphate from the 5'-end of triphosphorylated RNA, leading to a more labile monophosphorylated state that can stimulate subsequent ribonuclease cleavage. The chain is RNA pyrophosphohydrolase from Cupriavidus taiwanensis (strain DSM 17343 / BCRC 17206 / CCUG 44338 / CIP 107171 / LMG 19424 / R1) (Ralstonia taiwanensis (strain LMG 19424)).